The following is a 54-amino-acid chain: Sperm protamine P3 (54 aa).

The interval arginine 1–lysine 54 is disordered.

Gonads.

The protein localises to the nucleus. It is found in the chromosome. Functionally, protamines substitute for histones in the chromatin of sperm during the haploid phase of spermatogenesis. They compact sperm DNA into a highly condensed, stable and inactive complex. The polypeptide is Sperm protamine P3 (Bolinus brandaris (Purple dye murex)).